Reading from the N-terminus, the 210-residue chain is Proteasome subunit beta (210 aa).

The propeptide at 1–9 (MNDKNTLKG) is removed in mature form; by autocatalysis. The Nucleophile role is filled by Thr-10.

The protein belongs to the peptidase T1B family. In terms of assembly, the 20S proteasome core is composed of 14 alpha and 14 beta subunits that assemble into four stacked heptameric rings, resulting in a barrel-shaped structure. The two inner rings, each composed of seven catalytic beta subunits, are sandwiched by two outer rings, each composed of seven alpha subunits. The catalytic chamber with the active sites is on the inside of the barrel. Has a gated structure, the ends of the cylinder being occluded by the N-termini of the alpha-subunits. Is capped at one or both ends by the proteasome regulatory ATPase, PAN.

The protein resides in the cytoplasm. The catalysed reaction is Cleavage of peptide bonds with very broad specificity.. The formation of the proteasomal ATPase PAN-20S proteasome complex, via the docking of the C-termini of PAN into the intersubunit pockets in the alpha-rings, triggers opening of the gate for substrate entry. Interconversion between the open-gate and close-gate conformations leads to a dynamic regulation of the 20S proteasome proteolysis activity. Component of the proteasome core, a large protease complex with broad specificity involved in protein degradation. The sequence is that of Proteasome subunit beta from Methanothermobacter thermautotrophicus (strain ATCC 29096 / DSM 1053 / JCM 10044 / NBRC 100330 / Delta H) (Methanobacterium thermoautotrophicum).